Reading from the N-terminus, the 352-residue chain is 4-hydroxy-3-methylbut-2-en-1-yl diphosphate synthase (flavodoxin) (352 aa).

[4Fe-4S] cluster contacts are provided by C262, C265, C297, and E304.

This sequence belongs to the IspG family. [4Fe-4S] cluster serves as cofactor.

The enzyme catalyses (2E)-4-hydroxy-3-methylbut-2-enyl diphosphate + oxidized [flavodoxin] + H2O + 2 H(+) = 2-C-methyl-D-erythritol 2,4-cyclic diphosphate + reduced [flavodoxin]. The protein operates within isoprenoid biosynthesis; isopentenyl diphosphate biosynthesis via DXP pathway; isopentenyl diphosphate from 1-deoxy-D-xylulose 5-phosphate: step 5/6. Its function is as follows. Converts 2C-methyl-D-erythritol 2,4-cyclodiphosphate (ME-2,4cPP) into 1-hydroxy-2-methyl-2-(E)-butenyl 4-diphosphate. The polypeptide is 4-hydroxy-3-methylbut-2-en-1-yl diphosphate synthase (flavodoxin) (Campylobacter curvus (strain 525.92)).